A 228-amino-acid polypeptide reads, in one-letter code: uncharacterized protein (228 aa).

21 to 28 (GMIALGKT) provides a ligand contact to ATP.

This is an uncharacterized protein from Mycoplasma genitalium (strain ATCC 33530 / DSM 19775 / NCTC 10195 / G37) (Mycoplasmoides genitalium).